The primary structure comprises 460 residues: Argininosuccinate lyase (460 aa).

It belongs to the lyase 1 family. Argininosuccinate lyase subfamily.

Its subcellular location is the cytoplasm. It carries out the reaction 2-(N(omega)-L-arginino)succinate = fumarate + L-arginine. It participates in amino-acid biosynthesis; L-arginine biosynthesis; L-arginine from L-ornithine and carbamoyl phosphate: step 3/3. The polypeptide is Argininosuccinate lyase (Nitratidesulfovibrio vulgaris (strain DSM 19637 / Miyazaki F) (Desulfovibrio vulgaris)).